Reading from the N-terminus, the 226-residue chain is Large ribosomal subunit protein uL3 (226 aa).

A disordered region spans residues methionine 135–glutamine 158. Polar residues predominate over residues serine 137 to valine 150. Glutamine 158 carries the N5-methylglutamine modification.

The protein belongs to the universal ribosomal protein uL3 family. Part of the 50S ribosomal subunit. Forms a cluster with proteins L14 and L19. Post-translationally, methylated by PrmB.

One of the primary rRNA binding proteins, it binds directly near the 3'-end of the 23S rRNA, where it nucleates assembly of the 50S subunit. In Polaromonas naphthalenivorans (strain CJ2), this protein is Large ribosomal subunit protein uL3.